The following is a 258-amino-acid chain: Enterotoxin type D (258 aa).

The first 25 residues, 1–25 (MKKFNILIALLFFTSLVISPLNVKA), serve as a signal peptide directing secretion. Residues Asp212, His248, His250, and Asp252 each contribute to the Zn(2+) site.

Belongs to the staphylococcal/streptococcal toxin family. In terms of assembly, homodimer; zinc-dependent. Interacts with MHC class II molecules composed of alpha/HLA-DRA and beta/HLA-DRB1 chains. Zn(2+) is required as a cofactor.

Its subcellular location is the secreted. Functionally, staphylococcal enterotoxin that activates the host immune system by binding as unprocessed molecules to major histocompatibility (MHC) complex class II and T-cell receptor (TCR) molecules. In turn, this ternary complex activates a large number of T-lymphocytes initiating a systemic release of pro-inflammatory cytokines. In addition, induces B-cell proliferation and differentiation in the presence of T-cells. Causes also the intoxication staphylococcal food poisoning syndrome. In Staphylococcus aureus, this protein is Enterotoxin type D (entD).